The primary structure comprises 1709 residues: MKVEPLWSLDVGTQPVYSLVRTPDGTKMYAATGKTVVTFGPGPEITRQTSTQHPLVTCLAISPDGHMVVSMGTDGAVMFNDSTGAALFKYSHQNEVQAAAFSPDGSLFVSAAIGDVGIYHCRDVKTKVMKQSFKGTPRAIAWAPGSDWFVISTQDGDLVIMTPEGMELNSCNLGAPAWALKVVQCSSFLVQPNTALDVDIANSSDDEFTIPQTVTPSASASGRSGSGKRHKVELDREEFITSHNMDNFRILVASWDMRYRVINPSVYADGACIAKMTDGGSDSRSRSSSRRRLDGLLVAVSEIPFIPLCMEIIGNYVFLSGVGGSVVVLNSSNGRVLSSLYQVWESDPFISKAPLIPTESQSKHLPQKRTIMGQVTTCTDVNQRLMELRKREAMANRNVKNVTNPLAFHGMHTIWCYSMIHVEPSSLILGLSNGVLLCLSLRYAMIHSQYGSLYAYRRGLMSVSVMNLSTGRESILEVGMHVENLSIYESTLAIKTSSRLLLYRLQDPALKKRNIESVMDYYSSSTNGLIETDRSRRQNMSSLSYSFETSIKKRFVCSQLIVSNNHFFLCNVSHISVHDFSGKQTDRWTFKQLKCTYVRSIGGIPSNEAVLVGFDTGKVCIFKIGNKFPIELLLHRSPIVSLDISPDRKYISVVDRSDVVSVYKFLDDSEIVLGATNMAVVEHENTPTSYSRIAALAHVSLDGNLPGITTGQDYSVPLYTFKGTTSAIWDLVLPGVLARSTQKSVDICIDSGVSYTFQLSYPGSFVLCQNGNRAFIFNVSYLGQSLVNLDYSSLIEMVEVPMMPMVIYRTHKVLRMLLDSNYEAGAVFPSQAANYELNEAIKAANLGVPMDCWRDLAIAALLSNELDLAREVLATIGDIRSLKAIAEITRQTSTKTYLLLSALALSMCDHFSEASLLFAASDDIQMATELLFFINRECIPYNSPNSSLISSIAKKLICRELHSSLTGTEEKILEVLKTQGDSTYSPLGTQTAPEAKETNTALLTDFSDKLLAKGRATVNKFLSAIESGSSKADGPGNDNKDTYNYFNDYRILLRRQISSFAKTESERANLVVRHSKFLETSLEWRAAAASYLDMDDPESAIDVLITSKQTGALLRLVRIFPPVARELNHKAPSFNDFESPEDADEYAPSSVQNQMLKRAYRKALVYFEKSNDYSNAIFIAQRLGDPLVLLRLLIQQGSWSQVEALGKAYPEMMPSIHEAKASMLLREGRFIEALERLRLSGNTSKEAIIIKQLIDASIAECKFNLTRALTGQLAKQIAKTRAFAALSVSSMEYYAAIKAIRARVLVYTGYQQVMEYMVNILRSRDLSDITMIRLHDNTQSAKVVTAGIFLTSYAAMANELTNADSVFSEELENNTGILSGEDTVKASSQRSKKDNPPSLRSTIGFITSSTTPQLGSLAHIDLGINNMNIPPGISELIIWVCLALASRRTYPEVEARALKRILASRIPGPMIGYFRRQMLLVKGTPAKDFSHGESSDAESRDACPRCAAPLKALPPSRPVGAQDMAILSSLPHCCPVFSDICKNCGSPIVRSALSLKILPLVLAEPDDETSIAVALERAAAVEMDIEALMGETNRLEIGTDDLQTDEGVVDVLRRASIAGDGRGAVLTSEQFEKISPANIFIVDDTWSNPSLLPRFVVGNVIKRFFIRTISDFQLHYCTGCGFFFDGIEYEEYVIVTGSCPICGATNIVL.

WD repeat units lie at residues 51-89 (TQHP…ALFK) and 132-171 (SFKG…LNSC). The disordered stretch occupies residues 209–229 (TIPQTVTPSASASGRSGSGKR). The WD 3 repeat unit spans residues 634 to 673 (LHRSPIVSLDISPDRKYISVVDRSDVVSVYKFLDDSEIVL). An LRR 1 repeat occupies 1231 to 1256 (IEALERLRLSGNTSKEAIIIKQLIDA). The interval 1378–1404 (LSGEDTVKASSQRSKKDNPPSLRSTIG) is disordered. Residues 1414 to 1436 (LGSLAHIDLGINNMNIPPGISEL) form an LRR 2 repeat.

It is found in the cell projection. Its subcellular location is the cilium. It localises to the flagellum. The protein localises to the cytoplasm. The protein resides in the cytoskeleton. It is found in the flagellum axoneme. Its subcellular location is the flagellum basal body. Its function is as follows. Component of the intraflagellar transport complex A (IFT-A) involved in flagellar assembly. The polypeptide is Intraflagellar transport protein 122 (Giardia intestinalis (strain ATCC 50803 / WB clone C6) (Giardia lamblia)).